The primary structure comprises 441 residues: Probable acetylornithine aminotransferase, mitochondrial (441 aa).

Lys-294 carries the N6-(pyridoxal phosphate)lysine modification.

This sequence belongs to the class-III pyridoxal-phosphate-dependent aminotransferase family. The cofactor is pyridoxal 5'-phosphate.

The protein localises to the mitochondrion matrix. The enzyme catalyses N(2)-acetyl-L-ornithine + 2-oxoglutarate = N-acetyl-L-glutamate 5-semialdehyde + L-glutamate. It participates in amino-acid biosynthesis; L-arginine biosynthesis; N(2)-acetyl-L-ornithine from L-glutamate: step 4/4. This is Probable acetylornithine aminotransferase, mitochondrial (arg1) from Schizosaccharomyces pombe (strain 972 / ATCC 24843) (Fission yeast).